A 481-amino-acid chain; its full sequence is 6-phosphogluconate dehydrogenase, decarboxylating (481 aa).

Residues 11–16 (GLAVMG), 34–36 (NRT), 76–78 (VKA), and asparagine 104 each bind NADP(+). Substrate-binding positions include asparagine 104 and 130 to 132 (SGG). The Proton acceptor role is filled by lysine 184. 187–188 (HN) lines the substrate pocket. The active-site Proton donor is the glutamate 191. Tyrosine 192, lysine 259, arginine 286, arginine 445, and histidine 451 together coordinate substrate.

It belongs to the 6-phosphogluconate dehydrogenase family. Homodimer.

It carries out the reaction 6-phospho-D-gluconate + NADP(+) = D-ribulose 5-phosphate + CO2 + NADPH. It functions in the pathway carbohydrate degradation; pentose phosphate pathway; D-ribulose 5-phosphate from D-glucose 6-phosphate (oxidative stage): step 3/3. Its function is as follows. Catalyzes the oxidative decarboxylation of 6-phosphogluconate to ribulose 5-phosphate and CO(2), with concomitant reduction of NADP to NADPH. The chain is 6-phosphogluconate dehydrogenase, decarboxylating (Pgd) from Ceratitis capitata (Mediterranean fruit fly).